The primary structure comprises 245 residues: MFELTGRKALVTGASGAIGGAIARVLHAQGAIVGLHGTQIEKLETLATELGDRVKLFPANLANRDEVKALGQRAEADLEGVDILVNNAGITKDGLFLHMADPDWDIVLEVNLTAMFRLTREITQQMIRRRNGRIINVTSVAGAIGNPGQTNYCASKAGMIGFSKSLAQEIATRNITVNCVAPGFIESAMTDKLNHKQKEKIMVAIPIHRMGTGTEVASAVAYLASDHAAYVTGQTIHVNGGMAMI.

11-35 (VTGASGAIGGAIARVLHAQGAIVGL) contributes to the NAD(+) binding site. Residue Ser139 coordinates substrate. Tyr152 acts as the Proton acceptor in catalysis.

This sequence belongs to the short-chain dehydrogenases/reductases (SDR) family.

Its function is as follows. Proposed to modify Nod factor fatty acyl chain. This is Nodulation protein G (nodG) from Rhizobium meliloti (strain 1021) (Ensifer meliloti).